Here is an 851-residue protein sequence, read N- to C-terminus: MRKSSSPSLSNCNSDLASKIFGIPLDELQQGGHPDNEVPFIVRHVVDYIEEHGGLEQQGLFQVNGNAETVEWLRQRYDSGEEVDLVKEADVPSAISLLRFFLQELPEPVIPGSLHIHLLQLSQDYNNEDEFGRKLRFLLQQLPPVNYSLLKFLCRFLANVASHHEEIWSANSLAAVFGPDVFHIYTDVEDMKEQEIVSRIMAGLLENYYEFFENEEEDFSSNDLSSITEQVNELSEEEEEDEKLEHIEELPEEGVEKSAGMPEVLQLRMTENLLDSDSVTASTRIDAAAATTTNASDGNIKCSKPVAGTTADNEVMQQDFVFEDQKNNESVGILLEPCSDHGDSEDGCPERKEYLLCDSDKLPHLILDSSSKIRDLNANTELEVTEGQSVGVQGEAACIQIAQLDLKNVSDGDKWEEPFPAFKSWQEDCESGEAQLSPQAARMTHHPLGEDCPPVLSHRSLDFGQSQRFLHDPEALDFSSKALSFTRIRRSSFSSKDEKREDRTPYQLVKKLQKKIRQFEEQFERERNSKPSYSDIAANPKVLKWMTELTKLRKQIKDAKHKNSDGEFAPQTRPRSNTLPKSFGSSLDHEDGESEGEPRVIQKEKTPSKEATLELITKRLKENRAERHLPEDIKKMTKDHLIEEKTSLQKSLLYYESQHGRPVTREERHIVKPLYDRYRLVKQMLTRASITPVLGSPSTKRRGQMLQPIIEGETAHFFEEIKEEEEDGVSLSSELGDILSTSVHTQSSLENLESDAEENQEKLARDLCLSSTRAASVPELLEQLWKARAEKKKLRKMLREFEEAFYQQNGRNAQKEDRVPVLEEYKEYKRIKAKLRLLEVLISKQDSSKSI.

The Rho-GAP domain maps to 23–212; sequence IPLDELQQGG…GLLENYYEFF (190 aa). Residues 556-565 show a composition bias toward basic and acidic residues; the sequence is IKDAKHKNSD. Residues 556 to 611 form a disordered region; the sequence is IKDAKHKNSDGEFAPQTRPRSNTLPKSFGSSLDHEDGESEGEPRVIQKEKTPSKEA. Positions 573 to 585 are enriched in polar residues; sequence RPRSNTLPKSFGS. Positions 596-611 are enriched in basic and acidic residues; the sequence is GEPRVIQKEKTPSKEA.

Belongs to the FAM13 family.

This is Protein FAM13B (Fam13b) from Mus musculus (Mouse).